We begin with the raw amino-acid sequence, 340 residues long: Ketol-acid reductoisomerase (NADP(+)) (340 aa).

The 183-residue stretch at 1-183 folds into the KARI N-terminal Rossmann domain; it reads MAVTVYYDKD…GAGRTGIIET (183 aa). NADP(+) is bound by residues 26–29, lysine 49, serine 54, and 84–87; these read FGSQ and DELQ. Histidine 109 is a catalytic residue. Glycine 135 lines the NADP(+) pocket. A KARI C-terminal knotted domain is found at 184–329; the sequence is TFKDETETDL…EKLRAMMPWI (146 aa). Aspartate 192, glutamate 196, glutamate 228, and glutamate 232 together coordinate Mg(2+). Serine 253 is a substrate binding site.

Belongs to the ketol-acid reductoisomerase family. Mg(2+) serves as cofactor.

The catalysed reaction is (2R)-2,3-dihydroxy-3-methylbutanoate + NADP(+) = (2S)-2-acetolactate + NADPH + H(+). It catalyses the reaction (2R,3R)-2,3-dihydroxy-3-methylpentanoate + NADP(+) = (S)-2-ethyl-2-hydroxy-3-oxobutanoate + NADPH + H(+). The protein operates within amino-acid biosynthesis; L-isoleucine biosynthesis; L-isoleucine from 2-oxobutanoate: step 2/4. Its pathway is amino-acid biosynthesis; L-valine biosynthesis; L-valine from pyruvate: step 2/4. Functionally, involved in the biosynthesis of branched-chain amino acids (BCAA). Catalyzes an alkyl-migration followed by a ketol-acid reduction of (S)-2-acetolactate (S2AL) to yield (R)-2,3-dihydroxy-isovalerate. In the isomerase reaction, S2AL is rearranged via a Mg-dependent methyl migration to produce 3-hydroxy-3-methyl-2-ketobutyrate (HMKB). In the reductase reaction, this 2-ketoacid undergoes a metal-dependent reduction by NADPH to yield (R)-2,3-dihydroxy-isovalerate. This Campylobacter hominis (strain ATCC BAA-381 / DSM 21671 / CCUG 45161 / LMG 19568 / NCTC 13146 / CH001A) protein is Ketol-acid reductoisomerase (NADP(+)).